Here is a 621-residue protein sequence, read N- to C-terminus: Zinc metalloproteinase-disintegrin-like NaMP (621 aa).

Positions 1-20 (MIQPLLVAICLVVFPYQGSS) are cleaved as a signal peptide. Positions 21-188 (TILESGKVRD…GESDETIKKI (168 aa)) are excised as a propeptide. One can recognise a Peptidase M12B domain in the interval 206–402 (KHIELYMVAD…KSAQCILNDP (197 aa)). Asn-225, Asn-268, and Asn-319 each carry an N-linked (GlcNAc...) asparagine glycan. Disulfide bonds link Cys-317-Cys-397, Cys-357-Cys-381, Cys-359-Cys-364, Cys-413-Cys-442, Cys-424-Cys-437, Cys-426-Cys-432, Cys-436-Cys-459, Cys-450-Cys-456, Cys-455-Cys-481, Cys-468-Cys-488, Cys-475-Cys-507, Cys-500-Cys-512, Cys-519-Cys-569, Cys-534-Cys-579, Cys-547-Cys-557, Cys-564-Cys-605, and Cys-599-Cys-610. His-342 contributes to the Zn(2+) binding site. The active site involves Glu-343. 2 residues coordinate Zn(2+): His-346 and His-352. The Disintegrin domain maps to 410–496 (TAICGNGFVE…ECPMNHFHMN (87 aa)). Residues 474–476 (DCD) carry the D/ECD-tripeptide motif. N-linked (GlcNAc...) asparagine glycosylation is present at Asn-551.

Belongs to the venom metalloproteinase (M12B) family. P-III subfamily. P-IIIa sub-subfamily. Monomer. Requires Zn(2+) as cofactor. In terms of tissue distribution, expressed by the venom gland.

The protein resides in the secreted. Snake venom zinc metalloproteinase that inhibits platelet aggregation and degrades fibrinogen. The chain is Zinc metalloproteinase-disintegrin-like NaMP from Naja atra (Chinese cobra).